An 868-amino-acid polypeptide reads, in one-letter code: Leucine--tRNA ligase (868 aa).

A 'HIGH' region motif is present at residues 42–52 (PYPSGKLHMGH). The short motif at 627–631 (KMSKS) is the 'KMSKS' region element. Lys630 serves as a coordination point for ATP.

Belongs to the class-I aminoacyl-tRNA synthetase family.

It localises to the cytoplasm. It carries out the reaction tRNA(Leu) + L-leucine + ATP = L-leucyl-tRNA(Leu) + AMP + diphosphate. This Pseudomonas putida (strain W619) protein is Leucine--tRNA ligase.